A 115-amino-acid chain; its full sequence is Macrophage migration inhibitory factor (115 aa).

The Proton acceptor; via imino nitrogen role is filled by Pro2. Substrate-binding residues include Lys33 and Ile65. Position 78 is an N6-acetyllysine; alternate (Lys78). Lys78 bears the N6-succinyllysine; alternate mark. Residue Asn98 participates in substrate binding.

It belongs to the MIF family. Homotrimer. Interacts with CXCR2 extracellular domain. Interacts with the CD74 extracellular domain, USO1, COPS5 and BNIPL.

It localises to the secreted. The protein resides in the cytoplasm. The enzyme catalyses 3-phenylpyruvate = enol-phenylpyruvate. It carries out the reaction L-dopachrome = 5,6-dihydroxyindole-2-carboxylate. Functionally, pro-inflammatory cytokine involved in the innate immune response to bacterial pathogens. The expression of MIF at sites of inflammation suggests a role as mediator in regulating the function of macrophages in host defense. Counteracts the anti-inflammatory activity of glucocorticoids. Has phenylpyruvate tautomerase and dopachrome tautomerase activity (in vitro), but the physiological substrate is not known. It is not clear whether the tautomerase activity has any physiological relevance, and whether it is important for cytokine activity. The protein is Macrophage migration inhibitory factor of Homo sapiens (Human).